Reading from the N-terminus, the 1438-residue chain is DNA-directed RNA polymerase subunit beta' (1438 aa).

Zn(2+) contacts are provided by Cys-72, Cys-74, Cys-87, and Cys-90. The Mg(2+) site is built by Asp-483, Asp-485, and Asp-487. The Zn(2+) site is built by Cys-831, Cys-905, Cys-912, and Cys-915.

It belongs to the RNA polymerase beta' chain family. As to quaternary structure, the RNAP catalytic core consists of 2 alpha, 1 beta, 1 beta' and 1 omega subunit. When a sigma factor is associated with the core the holoenzyme is formed, which can initiate transcription. The cofactor is Mg(2+). Zn(2+) serves as cofactor.

It carries out the reaction RNA(n) + a ribonucleoside 5'-triphosphate = RNA(n+1) + diphosphate. In terms of biological role, DNA-dependent RNA polymerase catalyzes the transcription of DNA into RNA using the four ribonucleoside triphosphates as substrates. The chain is DNA-directed RNA polymerase subunit beta' from Flavobacterium psychrophilum (strain ATCC 49511 / DSM 21280 / CIP 103535 / JIP02/86).